The following is a 676-amino-acid chain: PAS domain-containing protein cky-1 (676 aa).

Residues 45 to 72 show a composition bias toward low complexity; it reads SALNNNSINVPNNNTMGMSSAGSSNGSN. The disordered stretch occupies residues 45–89; the sequence is SALNNNSINVPNNNTMGMSSAGSSNGSNLVNGQQRSTRGASKQRR. Residues 73–84 are compositionally biased toward polar residues; the sequence is LVNGQQRSTRGA. Residues 76 to 89 form a basic motif region; the sequence is GQQRSTRGASKQRR. Positions 76–129 constitute a bHLH domain; sequence GQQRSTRGASKQRRDQINVEIQKLRDLLPLSDLIKDRLFQLQVMSLGCIFIRKH. The helix-loop-helix motif stretch occupies residues 90 to 129; sequence DQINVEIQKLRDLLPLSDLIKDRLFQLQVMSLGCIFIRKH. Residues 165 to 215 enclose the PAS domain; the sequence is MLMVTRSGKILHVSDNASEYLGHSVEEIMCQGDSIYDLVDGRDHGAVQAEL. Residues 436–462 form a disordered region; it reads FSCQDSPPPSEEQQPSSPQTPPFTEQP.

Heterodimer; efficient DNA binding requires dimerization with another bHLH protein. Forms a heterodimer with ARNT homolog aha-1; binds DNA as heterodimer.

It localises to the nucleus. Transcription factor. Efficient DNA binding requires dimerization with another bHLH protein, such as ARNT homolog aha-1. Regulates transcription of target genes, probably acting in complex with aha-1. This Caenorhabditis elegans protein is PAS domain-containing protein cky-1.